A 1030-amino-acid chain; its full sequence is MMS19 nucleotide excision repair protein homolog (1030 aa).

N-acetylalanine is present on alanine 2. The residue at position 496 (lysine 496) is an N6-acetyllysine. 4 HEAT repeats span residues 866-904 (QRFF…RLPK), 908-946 (LPEL…EAPQ), 949-987 (SLHV…LPTP), and 990-1028 (LPYK…LGSP). Serine 1027 carries the phosphoserine modification.

It belongs to the MET18/MMS19 family. As to quaternary structure, component of the CIA complex. In the CIA complex, interacts directly with CIAO2B and CIAO3. Component of the MMXD complex, composed of CIAO1, ERCC2, CIAO2B, MMS19 and SLC25A5. Interacts with CIAO2B; the interaction is direct. Interacts with ERCC2/XPD; the interaction is direct. Interacts with ERCC3/XPB and NCOA3/RAC3. Interacts with RTEL1; the interaction mediates the association of RTEL1 with the CIA complex. Interacts with BRIP1. Interacts with KIF4A; the interaction facilitates the transfer of Fe-S clusters to KIF4A to ensure proper localization of KIF4A to the mitotic machinery components. Interacts with CCDC117; the interaction is indirect. Post-translationally, ubiquitinated; undergoes 'Lys-48'-linked polyubiquitination by MAGEF1-NSMCE1 ubiquitin ligase complex leading to proteasomal degradation. In terms of tissue distribution, ubiquitously expressed with higher expression in testis.

The protein resides in the nucleus. It localises to the cytoplasm. The protein localises to the cytoskeleton. It is found in the spindle. Its subcellular location is the microtubule organizing center. The protein resides in the centrosome. Its function is as follows. Key component of the cytosolic iron-sulfur protein assembly (CIA) complex, a multiprotein complex that mediates the incorporation of iron-sulfur cluster into apoproteins specifically involved in DNA metabolism and genomic integrity. In the CIA complex, MMS19 acts as an adapter between early-acting CIA components and a subset of cellular target iron-sulfur proteins such as ERCC2/XPD, FANCJ and RTEL1, thereby playing a key role in nucleotide excision repair (NER), homologous recombination-mediated double-strand break DNA repair, DNA replication and RNA polymerase II (POL II) transcription. As part of the mitotic spindle-associated MMXD complex, plays a role in chromosome segregation, probably by facilitating iron-sulfur (Fe-S) cluster assembly into ERCC2/XPD. Together with CIAO2, facilitates the transfer of Fe-S clusters to the motor protein KIF4A, which ensures proper localization of KIF4A to mitotic machinery components to promote the progression of mitosis. Indirectly acts as a transcriptional coactivator of estrogen receptor (ER), via its role in iron-sulfur insertion into some component of the TFIIH-machinery. The sequence is that of MMS19 nucleotide excision repair protein homolog from Homo sapiens (Human).